We begin with the raw amino-acid sequence, 188 residues long: Protein YecM (188 aa).

The protein to H.influenzae HI_1582/HI_1581.

The chain is Protein YecM (yecM) from Escherichia coli (strain K12).